Consider the following 159-residue polypeptide: Phosphopantetheine adenylyltransferase (159 aa).

A substrate-binding site is contributed by T10. Residues 10 to 11 (TF) and H18 contribute to the ATP site. Substrate contacts are provided by K42, L74, and R88. Residues 89–91 (GLR), E99, and 124–130 (NSFISST) contribute to the ATP site.

This sequence belongs to the bacterial CoaD family. Homohexamer. Mg(2+) is required as a cofactor.

It localises to the cytoplasm. It catalyses the reaction (R)-4'-phosphopantetheine + ATP + H(+) = 3'-dephospho-CoA + diphosphate. It participates in cofactor biosynthesis; coenzyme A biosynthesis; CoA from (R)-pantothenate: step 4/5. Its function is as follows. Reversibly transfers an adenylyl group from ATP to 4'-phosphopantetheine, yielding dephospho-CoA (dPCoA) and pyrophosphate. The chain is Phosphopantetheine adenylyltransferase from Shewanella pealeana (strain ATCC 700345 / ANG-SQ1).